The primary structure comprises 682 residues: DNA-directed RNA polymerase subunit beta' (682 aa).

Zn(2+)-binding residues include C69, C71, C87, and C90. The Mg(2+) site is built by D489, D491, and D493.

It belongs to the RNA polymerase beta' chain family. RpoC1 subfamily. In terms of assembly, in plastids the minimal PEP RNA polymerase catalytic core is composed of four subunits: alpha, beta, beta', and beta''. When a (nuclear-encoded) sigma factor is associated with the core the holoenzyme is formed, which can initiate transcription. Mg(2+) serves as cofactor. The cofactor is Zn(2+).

Its subcellular location is the plastid. It localises to the chloroplast. It catalyses the reaction RNA(n) + a ribonucleoside 5'-triphosphate = RNA(n+1) + diphosphate. Its function is as follows. DNA-dependent RNA polymerase catalyzes the transcription of DNA into RNA using the four ribonucleoside triphosphates as substrates. The chain is DNA-directed RNA polymerase subunit beta' from Vitis vinifera (Grape).